A 255-amino-acid polypeptide reads, in one-letter code: Indole-3-glycerol phosphate synthase (255 aa).

The protein belongs to the TrpC family.

The enzyme catalyses 1-(2-carboxyphenylamino)-1-deoxy-D-ribulose 5-phosphate + H(+) = (1S,2R)-1-C-(indol-3-yl)glycerol 3-phosphate + CO2 + H2O. It participates in amino-acid biosynthesis; L-tryptophan biosynthesis; L-tryptophan from chorismate: step 4/5. The polypeptide is Indole-3-glycerol phosphate synthase (Streptococcus thermophilus (strain ATCC BAA-250 / LMG 18311)).